The primary structure comprises 154 residues: Isotocin-neurophysin IT 1 (154 aa).

An N-terminal signal peptide occupies residues 1–20; that stretch reads MSGSMFSVFSLLYLLSVCSA. Cysteine 21 and cysteine 26 are disulfide-bonded. Glycine 29 carries the post-translational modification Glycine amide. 7 cysteine pairs are disulfide-bonded: cysteine 42/cysteine 86, cysteine 45/cysteine 59, cysteine 53/cysteine 76, cysteine 60/cysteine 66, cysteine 93/cysteine 105, cysteine 99/cysteine 117, and cysteine 106/cysteine 111.

Belongs to the vasopressin/oxytocin family.

Its function is as follows. Isotocin causes contraction of smooth muscles. This chain is Isotocin-neurophysin IT 1, found in Catostomus commersonii (White sucker).